An 89-amino-acid polypeptide reads, in one-letter code: OMEGA-ectatommitoxin(02)-Rm1a (89 aa).

The N-terminal stretch at 1 to 30 is a signal peptide; the sequence is MKDSYISIVIAYLMVTFILVSSMPIEGEKG. Cystine bridges form between Cys39-Cys52, Cys47-Cys68, and Cys70-Cys79. An EGF-like domain is found at 43-80; it reads YANYCFNGKCVHVVAQDEPGKPCYSCICDKFYIGKRCG.

This sequence belongs to the EGF domain peptide family. In terms of tissue distribution, expressed by the venom gland.

It localises to the secreted. Ant peptide with probable defensive activity which acts as a potent agonist of the mammalian epidermal growth factor receptor (EGFR). Mimics, both structurally and functionally, vertebrate epidermal growth factor (EGF) peptide hormones. In vivo, intraplantar injection in mice causes long-lasting (several days) hypersensitivity of the injected paw to both mechanical and thermal stimuli. Its long-lasting effect is unusual for venom toxins whose effects are usually immediate. One possible explanation is that it would reduce the duration of a nest attack, discourage future attacks, or enhance the actions of subsequent exposure to other pain-inducing venom peptides. This Rhytidoponera metallica (Australian green-headed ant) protein is OMEGA-ectatommitoxin(02)-Rm1a.